The chain runs to 237 residues: Uridylate kinase (237 aa).

12–15 (KLSG) contributes to the ATP binding site. Positions 20 to 25 (GENGYG) are involved in allosteric activation by GTP. Residue Gly54 participates in UMP binding. ATP is bound by residues Gly55 and Arg59. UMP contacts are provided by residues Asp72 and 133-140 (TGNPYFST). 2 residues coordinate ATP: Tyr166 and Asp169.

Belongs to the UMP kinase family. In terms of assembly, homohexamer.

The protein localises to the cytoplasm. It carries out the reaction UMP + ATP = UDP + ADP. The protein operates within pyrimidine metabolism; CTP biosynthesis via de novo pathway; UDP from UMP (UMPK route): step 1/1. Its activity is regulated as follows. Allosterically activated by GTP. Inhibited by UTP. Catalyzes the reversible phosphorylation of UMP to UDP. The polypeptide is Uridylate kinase (Clostridium tetani (strain Massachusetts / E88)).